Here is a 323-residue protein sequence, read N- to C-terminus: Cell division protein ZipA (323 aa).

Residues 1–5 (MQELR) lie on the Periplasmic side of the membrane. The chain crosses the membrane as a helical span at residues 6–26 (FVLIVVGALAIAALLFHGLWT). The Cytoplasmic portion of the chain corresponds to 27 to 323 (SKKEGKAKFG…QIVEFNAANA (297 aa)). Residues 35 to 92 (FGNKPLGKLDVDQEDKDTPGQERDFAPDPEDDFEIIRKDRKEPDFGMENSFDNKFSSD) are disordered. 2 stretches are compositionally biased toward basic and acidic residues: residues 41–60 (GKLDVDQEDKDTPGQERDFA) and 68–78 (EIIRKDRKEPD).

Belongs to the ZipA family. Interacts with FtsZ via their C-terminal domains.

Its subcellular location is the cell inner membrane. Its function is as follows. Essential cell division protein that stabilizes the FtsZ protofilaments by cross-linking them and that serves as a cytoplasmic membrane anchor for the Z ring. Also required for the recruitment to the septal ring of downstream cell division proteins. The polypeptide is Cell division protein ZipA (Vibrio campbellii (strain ATCC BAA-1116)).